A 588-amino-acid polypeptide reads, in one-letter code: Juvenile hormone esterase (588 aa).

Positions 1–23 (MKFPKNLFLVLFYTSWKFCDVCA) are cleaved as a signal peptide. 2 N-linked (GlcNAc...) asparagine glycosylation sites follow: Asn79 and Asn83. A disulfide bond links Cys91 and Cys109. Ser214 functions as the Acyl-ester intermediate in the catalytic mechanism. Asn257 carries N-linked (GlcNAc...) asparagine glycosylation. Cysteines 268 and 281 form a disulfide. Glu350 (charge relay system) is an active-site residue. N-linked (GlcNAc...) asparagine glycosylation is found at Asn389, Asn396, and Asn472. His479 (charge relay system) is an active-site residue.

This sequence belongs to the type-B carboxylesterase/lipase family.

The protein resides in the secreted. The catalysed reaction is juvenile hormone III + H2O = juvenile hormone III carboxylate + methanol + H(+). Its activity is regulated as follows. Inhibited by 3-octylthio-1,1,1-trifluoro-2-propanone (OTFP), a specific inhibitor of juvenile hormone esterase (JHE), but not by diisopropyl fluorophosphate (DFP), a serine enzyme inhibitor. Its function is as follows. May function as a juvenile hormone (JH)-specific degradation enzyme in vivo decreasing JH activity. Hydrolyzes JH III in vitro. Hydrolyzes effectively also methyl hepthylthioacetothioate (HEPTAT), a synthetic substrate. Of the general esterase substrates, it has preference for 2-naphthyl acetate (2-NA) and shows a weak activity for 1-NA and 4-nitrophenylacetate (4-NPA). The chain is Juvenile hormone esterase from Tribolium castaneum (Red flour beetle).